Consider the following 208-residue polypeptide: Protein GrpE (208 aa).

Basic and acidic residues predominate over residues 1 to 12; that stretch reads MTNKDESVEKNT. The segment at 1 to 51 is disordered; it reads MTNKDESVEKNTESTVEETNVKQNIDDSVEQAEESKGHLQDEAIEETSDEN. The segment covering 13–23 has biased composition (polar residues); the sequence is ESTVEETNVKQ. Residues 42–51 show a composition bias toward acidic residues; it reads EAIEETSDEN.

This sequence belongs to the GrpE family. Homodimer.

It is found in the cytoplasm. Participates actively in the response to hyperosmotic and heat shock by preventing the aggregation of stress-denatured proteins, in association with DnaK and GrpE. It is the nucleotide exchange factor for DnaK and may function as a thermosensor. Unfolded proteins bind initially to DnaJ; upon interaction with the DnaJ-bound protein, DnaK hydrolyzes its bound ATP, resulting in the formation of a stable complex. GrpE releases ADP from DnaK; ATP binding to DnaK triggers the release of the substrate protein, thus completing the reaction cycle. Several rounds of ATP-dependent interactions between DnaJ, DnaK and GrpE are required for fully efficient folding. This is Protein GrpE from Staphylococcus aureus (strain USA300).